Reading from the N-terminus, the 705-residue chain is MSKQRIYEYAKELNLKSKEIIDELKSMNIEVSNHMQALEDDQIKALDKKFKKEQKNDNKQSTQNNHQKSNNQNQNKGQQKDNKKNQQQNNKGNKGNKKNNRNNKKNNKNNKPQNQPAAPKEIPSKVTYQEGITVGEFADKLNVESSEIIKKLFLLGIVANINQSLNQETIELIADDYGVEVEEEVVINEEDLSIYFEDEKDDPEAIERPAVVTIMGHVDHGKTTLLDSIRHTKVTAGEAGGITQHIGAYQIENDGKKITFLDTPGHAAFTTMRARGAQVTDITILVVAADDGVMPQTIEAINHAKEAEVPIIVAVNKIDKPTSNPDRVMQELTEYGLIPEDWGGETIFVPLSALSGDGIDDLLEMIGLVAEVQELKANPKNRAVGTVIEAELDKSRGPSASLLVQNGTLNVGDAIVVGNTYGRIRAMVNDLGQRIKTAGPSTPVEITGINDVPQAGDRFVVFSDEKQARRIGESRHEASIIQQRQESKNVSLDNLFEQMKQGEMKDLNVIIKGDVQGSVEALAASLMKIDVEGVNVRIIHTAVGAINESDVTLANASNGIIIGFNVRPDSGAKRAAEAENVDMRLHRVIYNVIEEIESAMKGLLDPEFEEQVIGQAEVRQTFKVSKVGTIAGCYVTEGKITRNAGVRIIRDGIVQYEGELDTLKRFKDDAKEVAKGYECGITIENYNDLKEGDVIEAFEMVEIKR.

The interval 40–124 is disordered; sequence DDQIKALDKK…QPAAPKEIPS (85 aa). Residues 41-58 show a composition bias toward basic and acidic residues; the sequence is DQIKALDKKFKKEQKNDN. The span at 59 to 77 shows a compositional bias: low complexity; sequence KQSTQNNHQKSNNQNQNKG. Residues 94-108 show a composition bias toward basic residues; the sequence is KGNKKNNRNNKKNNK. In terms of domain architecture, tr-type G spans 207 to 376; that stretch reads ERPAVVTIMG…GLVAEVQELK (170 aa). The G1 stretch occupies residues 216–223; that stretch reads GHVDHGKT. 216–223 lines the GTP pocket; sequence GHVDHGKT. The interval 241 to 245 is G2; it reads GITQH. The G3 stretch occupies residues 262-265; it reads DTPG. Residues 262–266 and 316–319 contribute to the GTP site; these read DTPGH and NKID. The interval 316-319 is G4; the sequence is NKID. The tract at residues 352–354 is G5; sequence SAL.

The protein belongs to the TRAFAC class translation factor GTPase superfamily. Classic translation factor GTPase family. IF-2 subfamily.

Its subcellular location is the cytoplasm. Functionally, one of the essential components for the initiation of protein synthesis. Protects formylmethionyl-tRNA from spontaneous hydrolysis and promotes its binding to the 30S ribosomal subunits. Also involved in the hydrolysis of GTP during the formation of the 70S ribosomal complex. The polypeptide is Translation initiation factor IF-2 (Staphylococcus aureus (strain USA300)).